A 267-amino-acid chain; its full sequence is Small ribosomal subunit protein uS2 (267 aa).

The disordered stretch occupies residues 225–267 (LREQELEGEEQEEAAPATEEEKKELIEEAVAEGEAEETEEEEK). The span at 251–267 (EEAVAEGEAEETEEEEK) shows a compositional bias: acidic residues.

This sequence belongs to the universal ribosomal protein uS2 family.

The protein is Small ribosomal subunit protein uS2 of Nitratiruptor sp. (strain SB155-2).